A 692-amino-acid chain; its full sequence is Penicillin-binding protein activator LpoA (692 aa).

Residues Met-1–Ala-26 form the signal peptide. A lipid anchor (N-palmitoyl cysteine) is attached at Cys-27. A lipid anchor (S-diacylglycerol cysteine) is attached at Cys-27. 2 disordered regions span residues Ala-297 to Thr-316 and Val-324 to His-373. A compositionally biased stretch (low complexity) spans Pro-332–Pro-363.

The protein belongs to the LpoA family. As to quaternary structure, interacts with PBP1a.

It localises to the cell outer membrane. Functionally, regulator of peptidoglycan synthesis that is essential for the function of penicillin-binding protein 1A (PBP1a). The protein is Penicillin-binding protein activator LpoA of Edwardsiella piscicida.